The sequence spans 715 residues: Transcription factor MST12 (715 aa).

Over residues 214–224 (SSSFNAQQVSF) the composition is skewed to low complexity. Disordered stretches follow at residues 214-243 (SSSF…MPPP), 439-469 (AAHR…NSPP), and 518-539 (PMPS…AQGG). C2H2-type zinc fingers lie at residues 564–588 (HSCP…VRTH) and 594–616 (YICP…KRTH). The interval 632-691 (EEEYSGDDHLGSLEEASPTSEGGYVTSSLNSAMAHSNTSQHPGSNAVSPNPGPMSHAPTY) is disordered. The span at 648–679 (SPTSEGGYVTSSLNSAMAHSNTSQHPGSNAVS) shows a compositional bias: polar residues.

Belongs to the STE12 transcription factor family.

Its subcellular location is the nucleus. Transcription factor that may function downstream of PMK1 to regulate genes involved in infectious hyphae growth. Is not essential for vegetative growth, conidiation or appressorium formation. May be involved in the regulation of the expression of the cell surface sensor MSB2. This Pyricularia oryzae (strain 70-15 / ATCC MYA-4617 / FGSC 8958) (Rice blast fungus) protein is Transcription factor MST12.